Reading from the N-terminus, the 107-residue chain is MMKVLVVVALLVTLISYSSSEGIDDLEADELLSLMANEQTRKECIPKHHECTSNKHGRCRGNFFKYKCQCTTVVTQDGEQTERCFCGTPPHHKAAELVVGFGKKIFG.

The first 20 residues, 1–20 (MMKVLVVVALLVTLISYSSS), serve as a signal peptide directing secretion. A propeptide spanning residues 21–41 (EGIDDLEADELLSLMANEQTR) is cleaved from the precursor. Disulfide bonds link cysteine 44–cysteine 59, cysteine 51–cysteine 68, and cysteine 70–cysteine 84.

This sequence belongs to the neurotoxin 19 (CSTX) family. 04 (U1-Lctx) subfamily. Expressed by the venom gland.

The protein localises to the secreted. This Lycosa singoriensis (Wolf spider) protein is U1-lycotoxin-Ls1h.